We begin with the raw amino-acid sequence, 92 residues long: Elongation factor 1-beta (92 aa).

It belongs to the EF-1-beta/EF-1-delta family.

Functionally, promotes the exchange of GDP for GTP in EF-1-alpha/GDP, thus allowing the regeneration of EF-1-alpha/GTP that could then be used to form the ternary complex EF-1-alpha/GTP/AAtRNA. The chain is Elongation factor 1-beta from Pyrobaculum arsenaticum (strain DSM 13514 / JCM 11321 / PZ6).